The primary structure comprises 760 residues: Prolyl endopeptidase FAP (760 aa).

Residues 1–4 (MKTW) are Cytoplasmic-facing. Residues 5-25 (LKIVFGVATSAVLALLVMCIV) traverse the membrane as a helical; Signal-anchor for type II membrane protein segment. The Extracellular portion of the chain corresponds to 26 to 760 (LRPSRVHNSE…FLKQCFSLSD (735 aa)). Asparagine 49, asparagine 92, and asparagine 99 each carry an N-linked (GlcNAc...) asparagine glycan. Glutamate 203 and glutamate 204 together coordinate substrate. 2 N-linked (GlcNAc...) asparagine glycosylation sites follow: asparagine 227 and asparagine 314. Disulfide bonds link cysteine 321-cysteine 332, cysteine 438-cysteine 441, and cysteine 448-cysteine 466. A coiled-coil region spans residues 481–512 (TDQEIKILEDNKELENALKNIQLPKEEIKKLK). Serine 624 acts as the Charge relay system in catalysis. Cysteine 643 and cysteine 755 are oxidised to a cystine. N-linked (GlcNAc...) asparagine glycosylation occurs at asparagine 679. Active-site charge relay system residues include aspartate 702 and histidine 734.

The protein belongs to the peptidase S9B family. As to quaternary structure, homodimer; homodimerization is required for activity of both plasma membrane and soluble forms. The monomer is inactive. Heterodimer with DPP4. Interacts with PLAUR; the interaction occurs at the cell surface of invadopodia membranes. Interacts with ITGB1. Interacts with ITGA3. Associates with integrin alpha-3/beta-1; the association occurs in a collagen-dependent manner at the cell surface of invadopodia membranes. N-glycosylated. In terms of processing, the N-terminus may be blocked.

The protein resides in the cell surface. Its subcellular location is the cell membrane. It is found in the cell projection. It localises to the lamellipodium membrane. The protein localises to the invadopodium membrane. The protein resides in the ruffle membrane. Its subcellular location is the membrane. It is found in the secreted. The catalysed reaction is Release of an N-terminal dipeptide, Xaa-Yaa-|-Zaa-, from a polypeptide, preferentially when Yaa is Pro, provided Zaa is neither Pro nor hydroxyproline.. It catalyses the reaction Hydrolysis of Pro-|-Xaa &gt;&gt; Ala-|-Xaa in oligopeptides.. With respect to regulation, gelatinase activity is inhibited by serine-protease inhibitors, such as phenylmethylsulfonyl fluoride (PMSF), 4-(2-aminoethyl)-benzenesulfonyl fluoride hydrochloride (AEBSF), 4-amidino phenylsulfonyl fluoride (APSF) and diisopropyl fluorophosphate (DFP), N-ethylmaleimide (NEM) and phenylmethylsulfonyl fluoride (PMSF). Dipeptidyl peptidase activity is inhibited by 2,2'-azino-bis(3-ethylbenzthiazoline-6-sulfonic acid), diisopropylfluorophosphate (DFP). Prolyl endopeptidase activity is inhibited by the boronic acid peptide Ac-Gly-BoroPro, Ac-Gly-Pro-chloromethyl ketone and Thr-Ser-Gly-chloromethyl ketone. Functionally, cell surface glycoprotein serine protease that participates in extracellular matrix degradation and involved in many cellular processes including tissue remodeling, fibrosis, wound healing, inflammation and tumor growth. Both plasma membrane and soluble forms exhibit post-proline cleaving endopeptidase activity, with a marked preference for Ala/Ser-Gly-Pro-Ser/Asn/Ala consensus sequences, on substrate such as alpha-2-antiplasmin SERPINF2 and SPRY2. Degrade also gelatin, heat-denatured type I collagen, but not native collagen type I and IV, vibronectin, tenascin, laminin, fibronectin, fibrin or casein. Also has dipeptidyl peptidase activity, exhibiting the ability to hydrolyze the prolyl bond two residues from the N-terminus of synthetic dipeptide substrates provided that the penultimate residue is proline, with a preference for Ala-Pro, Ile-Pro, Gly-Pro, Arg-Pro and Pro-Pro. Natural neuropeptide hormones for dipeptidyl peptidase are the neuropeptide Y (NPY), peptide YY (PYY), substance P (TAC1) and brain natriuretic peptide 32 (NPPB). The plasma membrane form, in association with either DPP4, PLAUR or integrins, is involved in the pericellular proteolysis of the extracellular matrix (ECM), and hence promotes cell adhesion, migration and invasion through the ECM. Plays a role in tissue remodeling during development and wound healing. Participates in the cell invasiveness towards the ECM in malignant melanoma cancers. Enhances tumor growth progression by increasing angiogenesis, collagen fiber degradation and apoptosis and by reducing antitumor response of the immune system. Promotes glioma cell invasion through the brain parenchyma by degrading the proteoglycan brevican. Acts as a tumor suppressor in melanocytic cells through regulation of cell proliferation and survival in a serine protease activity-independent manner. The sequence is that of Prolyl endopeptidase FAP from Bos taurus (Bovine).